The chain runs to 27 residues: Protamine-A (27 aa).

A disordered region spans residues 1–27 (ARRRRRHASTKLKRRRRRRRHGKKSHK).

As to expression, testis.

It localises to the nucleus. The protein resides in the chromosome. Functionally, protamines substitute for histones in the chromatin of sperm during the haploid phase of spermatogenesis. They compact sperm DNA into a highly condensed, stable and inactive complex. This is Protamine-A from Acipenser stellatus (Sevruga).